The primary structure comprises 142 residues: Augurin-A (142 aa).

The N-terminal stretch at 1–28 (MLSEKFHLRLLTLLTLLTALSLTDVASE) is a signal peptide. 2 consecutive propeptides follow at residues 29 to 66 (SKLEKLLMKRVDRDVKPAAAVAVSPSKAKEFLTSLKRP) and 127 to 142 (GAASYRHGANVNYDYY).

This sequence belongs to the augurin family.

It localises to the secreted. The protein resides in the cytoplasm. It is found in the apical cell membrane. Probable hormone. Required for the proper formation of the central nervous system by attenuating cell proliferation during development. The polypeptide is Augurin-A (Danio rerio (Zebrafish)).